Reading from the N-terminus, the 556-residue chain is Glutamine--tRNA ligase (556 aa).

Residues 34–44 (PEPNGYLHIGH) carry the 'HIGH' region motif. ATP contacts are provided by residues 35–37 (EPN) and 41–47 (HIGHAKS). Asp-67 and Tyr-212 together coordinate L-glutamine. ATP-binding positions include Thr-231, 261–262 (RL), and 269–271 (MSK). Positions 268-272 (VMSKR) match the 'KMSKS' region motif.

The protein belongs to the class-I aminoacyl-tRNA synthetase family. In terms of assembly, monomer.

It is found in the cytoplasm. The enzyme catalyses tRNA(Gln) + L-glutamine + ATP = L-glutaminyl-tRNA(Gln) + AMP + diphosphate. This chain is Glutamine--tRNA ligase, found in Vibrio cholerae serotype O1 (strain ATCC 39315 / El Tor Inaba N16961).